Reading from the N-terminus, the 123-residue chain is Probable U6 snRNA-associated Sm-like protein LSm4 (123 aa).

The region spanning 3-76 (LPLSLLKTAQ…IKYLRIPETV (74 aa)) is the Sm domain. The segment covering 85–97 (NEVRRQQQREQSR) has biased composition (basic and acidic residues). A disordered region spans residues 85 to 123 (NEVRRQQQREQSRGRGGGRGGRGGHRGGGGNRGGRGGAR). Residues 98-123 (GRGGGRGGRGGHRGGGGNRGGRGGAR) show a composition bias toward gly residues.

The protein belongs to the snRNP Sm proteins family. As to quaternary structure, component of the precatalytic spliceosome (spliceosome B complex). Component of the U4/U6-U5 tri-snRNP complex, a building block of the precatalytic spliceosome (spliceosome B complex). LSM2, LSM3, LSM4, LSM5, LSM6, LSM7 and LSM8 form a heptameric, ring-shaped subcomplex (the LSM2-8 complex) that is part of the U4/U6-U5 tri-snRNP complex and the precatalytic spliceosome.

Its subcellular location is the nucleus. Functionally, plays a role in pre-mRNA splicing as component of the U4/U6-U5 tri-snRNP complex that is involved in spliceosome assembly, and as component of the precatalytic spliceosome (spliceosome B complex). The heptameric LSM2-8 complex binds specifically to the 3'-terminal U-tract of U6 snRNA. This Caenorhabditis elegans protein is Probable U6 snRNA-associated Sm-like protein LSm4 (lsm-4).